A 237-amino-acid polypeptide reads, in one-letter code: uncharacterized protein (237 aa).

Residues 1–28 (MNRPLLSVAGSLFVAAWALYIFSCFQHG) form the signal peptide. Residues 52–96 (NARDTAAHPSDTADNTSGSSTTTDPRSHGNAPPAPVGGAAQTHTQ) are disordered. A compositionally biased stretch (polar residues) spans 63–75 (TADNTSGSSTTTD).

This is an uncharacterized protein from Treponema pallidum (strain Nichols).